Reading from the N-terminus, the 344-residue chain is L-rhamnose-proton symporter (344 aa).

The next 10 helical transmembrane spans lie at 4-24, 38-58, 74-94, 101-121, 137-157, 175-195, 214-234, 259-279, 290-310, and 323-343; these read AITM…CFYA, WSVG…ALLL, LPVF…GLTM, MGIG…TPII, TLLG…AGQL, LVLA…MNAA, LPSY…FCFI, VLLS…YAWG, ISWM…GLVL, and VLSL…IGMA.

Belongs to the L-rhamnose transporter (TC 2.A.7.6) family.

It is found in the cell inner membrane. It carries out the reaction L-rhamnopyranose(in) + H(+)(in) = L-rhamnopyranose(out) + H(+)(out). Functionally, uptake of L-rhamnose across the cytoplasmic membrane with the concomitant transport of protons into the cell (symport system). The protein is L-rhamnose-proton symporter of Escherichia coli (strain K12 / MC4100 / BW2952).